The following is a 189-amino-acid chain: Endoribonuclease YbeY (189 aa).

Residues 1–10 (MKERSSSPGT) show a composition bias toward polar residues. Residues 1–23 (MKERSSSPGTPDSGRRARPKPAK) form a disordered region. Zn(2+) is bound by residues His-141, His-145, and His-151.

It belongs to the endoribonuclease YbeY family. Zn(2+) serves as cofactor.

Its subcellular location is the cytoplasm. Single strand-specific metallo-endoribonuclease involved in late-stage 70S ribosome quality control and in maturation of the 3' terminus of the 16S rRNA. This Nitrosospira multiformis (strain ATCC 25196 / NCIMB 11849 / C 71) protein is Endoribonuclease YbeY.